The sequence spans 188 residues: Tetratricopeptide repeat protein 36 (188 aa).

TPR repeat units lie at residues 50–83 (SKAL…LPER), 85–117 (SAYN…SGGR), and 122–155 (RQGF…GSPF).

This sequence belongs to the TTC36 family.

This is Tetratricopeptide repeat protein 36 (TTC36) from Bos taurus (Bovine).